The following is a 378-amino-acid chain: Chaperone protein DnaJ (378 aa).

In terms of domain architecture, J spans 5-70 (DFYEILGVSK…EKRSAYDRMG (66 aa)). A CR-type zinc finger spans residues 137 to 215 (GCKKEISFTA…CHGNGVKDKS (79 aa)). 8 residues coordinate Zn(2+): C150, C153, C167, C170, C189, C192, C203, and C206. 4 CXXCXGXG motif repeats span residues 150–157 (CDTCDGKG), 167–174 (CQTCHGQG), 189–196 (CPHCGGTG), and 203–210 (CSDCHGNG).

It belongs to the DnaJ family. As to quaternary structure, homodimer. Zn(2+) serves as cofactor.

The protein resides in the cytoplasm. Functionally, participates actively in the response to hyperosmotic and heat shock by preventing the aggregation of stress-denatured proteins and by disaggregating proteins, also in an autonomous, DnaK-independent fashion. Unfolded proteins bind initially to DnaJ; upon interaction with the DnaJ-bound protein, DnaK hydrolyzes its bound ATP, resulting in the formation of a stable complex. GrpE releases ADP from DnaK; ATP binding to DnaK triggers the release of the substrate protein, thus completing the reaction cycle. Several rounds of ATP-dependent interactions between DnaJ, DnaK and GrpE are required for fully efficient folding. Also involved, together with DnaK and GrpE, in the DNA replication of plasmids through activation of initiation proteins. This is Chaperone protein DnaJ from Psychrobacter cryohalolentis (strain ATCC BAA-1226 / DSM 17306 / VKM B-2378 / K5).